Reading from the N-terminus, the 300-residue chain is MMRILLFLATNLAVVLVASITLRLLGVEPYLNANGLNMNSLLIFCFVIGMAGSLVSLFISKWMAKMSTKAKVIEQPGNATERWLLDTVGELARDAGIKMPEVAIFPAQQSNAFATGWNKNDALVAVSAGLLERMRPEEIRAVLAHEIGHVANGDMVTLALIQGVLNTFVMFFARIVAQLVDSFLRRDDEGGGLGFFGYMAVVIVAEIVFGLVASMVVAWFSRFREYRADAAGAKLAGSGAMINALARLKAETQMPDQMPDTLTAFAITTGQTRKLMERLFASHPPLDDRIRALKESAYRE.

A run of 2 helical transmembrane segments spans residues 4–24 and 40–60; these read ILLFLATNLAVVLVASITLRL and SLLIFCFVIGMAGSLVSLFIS. H145 is a Zn(2+) binding site. E146 is a catalytic residue. H149 provides a ligand contact to Zn(2+). 2 helical membrane-spanning segments follow: residues 153–173 and 193–213; these read GDMVTLALIQGVLNTFVMFFA and LGFFGYMAVVIVAEIVFGLVA. E225 is a Zn(2+) binding site.

The protein belongs to the peptidase M48B family. Zn(2+) is required as a cofactor.

It localises to the cell inner membrane. The polypeptide is Protease HtpX (Chromohalobacter salexigens (strain ATCC BAA-138 / DSM 3043 / CIP 106854 / NCIMB 13768 / 1H11)).